A 513-amino-acid chain; its full sequence is GMP synthase [glutamine-hydrolyzing] (513 aa).

The 198-residue stretch at 3-200 (SVLVLDFGSQ…LINIAGIRPD (198 aa)) folds into the Glutamine amidotransferase type-1 domain. C80 (nucleophile) is an active-site residue. Active-site residues include H174 and E176. In terms of domain architecture, GMPS ATP-PPase spans 201 to 388 (WSSKSFIEHQ…LGIPEDILMR (188 aa)). Position 228 to 234 (228 to 234 (SGGVDST)) interacts with ATP.

In terms of assembly, homodimer.

The enzyme catalyses XMP + L-glutamine + ATP + H2O = GMP + L-glutamate + AMP + diphosphate + 2 H(+). It participates in purine metabolism; GMP biosynthesis; GMP from XMP (L-Gln route): step 1/1. Catalyzes the synthesis of GMP from XMP. The polypeptide is GMP synthase [glutamine-hydrolyzing] (Chlorobium luteolum (strain DSM 273 / BCRC 81028 / 2530) (Pelodictyon luteolum)).